The sequence spans 353 residues: G-protein coupled estrogen receptor 1 (353 aa).

The Extracellular portion of the chain corresponds to 1–40 (MEEQTTNVIQIYVNGTEQFNASFDFNITDVKESTDTYEFY). Residues 41–61 (IIGLFLSCLYTIFLFPIGFIG) traverse the membrane as a helical segment. Residues 62-81 (NILILVVNLNHRERMTIPDL) lie on the Cytoplasmic side of the membrane. The helical transmembrane segment at 82–102 (YFVNLAVADLILVADSLIEVF) threads the bilayer. The Extracellular segment spans residues 103–112 (NLNEKYYDYA). Residues 113–133 (VLCTFMSLFLQVNMYSSIFFL) traverse the membrane as a helical segment. A disulfide bridge connects residues C115 and C192. Over 134–160 (TWMSFDRYVALTSSMSSSPLRTMQHAK) the chain is Cytoplasmic. A helical transmembrane segment spans residues 161 to 181 (LSCSLIWMASILATLLPFTIV). Residues 182–202 (QTQHTGEVHFCFANVFEIQWL) lie on the Extracellular side of the membrane. A helical transmembrane segment spans residues 203–223 (EVTIGFLIPFSIIGLCYSLIV). Residues 224 to 245 (RTLMRAQKHKGLWPRRQKALRM) are Cytoplasmic-facing. The helical transmembrane segment at 246–266 (IVVVVLVFFICWLPENVFISI) threads the bilayer. The Extracellular segment spans residues 267 to 292 (QLLQGTADPSKRTDTTLWHDYPLTGH). Residues 293 to 313 (IVNLAAFSNSCLNPIIYSFLG) traverse the membrane as a helical segment. Residues 314-353 (ETFRDKLRLFIKRKASWSVVYRFCNHTLDLQIPVRSESEV) lie on the Cytoplasmic side of the membrane.

Belongs to the G-protein coupled receptor 1 family. Homodimer. Heterodimer. In terms of tissue distribution, expressed in brain regions that are known to control reproduction and sex behavior. Expressed in ovary, muscle and intestine. Expressed in early germ cells of the testis, including the spermatogonia, spermatocytes, and somatic cells such as Sertoli cells.

It localises to the nucleus. The protein localises to the cytoplasm. Its subcellular location is the perinuclear region. It is found in the cytoskeleton. The protein resides in the cytoplasmic vesicle membrane. It localises to the cell membrane. The protein localises to the basolateral cell membrane. Its subcellular location is the endoplasmic reticulum membrane. It is found in the early endosome. The protein resides in the recycling endosome. It localises to the golgi apparatus. The protein localises to the trans-Golgi network. Its subcellular location is the golgi apparatus membrane. It is found in the cell projection. The protein resides in the dendrite. It localises to the dendritic spine membrane. The protein localises to the axon. Its subcellular location is the postsynaptic density. It is found in the mitochondrion membrane. Functionally, membrane G-protein coupled estrogen receptor that binds to 17-beta-estradiol (E2) with high affinity, leading to rapid and transient activation of numerous intracellular signaling pathways. Plays a role in the embryonic development of sensory and motor neurons. Specifically induces apoptosis and reduces proliferation of brain cells. Involved in maintenance of meiotic arrest in oocytes. This is G-protein coupled estrogen receptor 1 (gper1) from Danio rerio (Zebrafish).